The sequence spans 329 residues: Peroxidase 73 (329 aa).

The signal sequence occupies residues 1-25 (MARFSLVVVVTLSLAISMFPDTTTA). Cystine bridges form between C36/C119, C69/C74, C125/C325, and C204/C236. The active-site Proton acceptor is the H67. 5 residues coordinate Ca(2+): D68, V71, G73, D75, and S77. P167 contributes to the substrate binding site. Residue H197 participates in heme b binding. T198 provides a ligand contact to Ca(2+). An N-linked (GlcNAc...) asparagine glycan is attached at N215. Residues D249, T252, and D257 each coordinate Ca(2+).

This sequence belongs to the peroxidase family. Classical plant (class III) peroxidase subfamily. Heme b is required as a cofactor. It depends on Ca(2+) as a cofactor. Expressed in the whole plant, with the highest expression in roots.

The protein localises to the secreted. The enzyme catalyses 2 a phenolic donor + H2O2 = 2 a phenolic radical donor + 2 H2O. Its function is as follows. Removal of H(2)O(2), oxidation of toxic reductants, biosynthesis and degradation of lignin, suberization, auxin catabolism, response to environmental stresses such as wounding, pathogen attack and oxidative stress. These functions might be dependent on each isozyme/isoform in each plant tissue. This Arabidopsis thaliana (Mouse-ear cress) protein is Peroxidase 73 (PER73).